The sequence spans 337 residues: Fructose-1,6-bisphosphatase class 1 (337 aa).

The Mg(2+) site is built by Glu89, Asp112, Leu114, and Asp115. Residues 115–118 (DGSS), Asn208, Tyr241, and Lys271 contribute to the substrate site. Glu277 is a binding site for Mg(2+).

This sequence belongs to the FBPase class 1 family. As to quaternary structure, homotetramer. It depends on Mg(2+) as a cofactor.

It is found in the cytoplasm. It carries out the reaction beta-D-fructose 1,6-bisphosphate + H2O = beta-D-fructose 6-phosphate + phosphate. It functions in the pathway carbohydrate biosynthesis; gluconeogenesis. This chain is Fructose-1,6-bisphosphatase class 1, found in Psychromonas ingrahamii (strain DSM 17664 / CCUG 51855 / 37).